A 170-amino-acid polypeptide reads, in one-letter code: Peptide methionine sulfoxide reductase MsrA (170 aa).

Residue cysteine 13 is part of the active site.

It belongs to the MsrA Met sulfoxide reductase family.

The catalysed reaction is L-methionyl-[protein] + [thioredoxin]-disulfide + H2O = L-methionyl-(S)-S-oxide-[protein] + [thioredoxin]-dithiol. It catalyses the reaction [thioredoxin]-disulfide + L-methionine + H2O = L-methionine (S)-S-oxide + [thioredoxin]-dithiol. Functionally, has an important function as a repair enzyme for proteins that have been inactivated by oxidation. Catalyzes the reversible oxidation-reduction of methionine sulfoxide in proteins to methionine. The chain is Peptide methionine sulfoxide reductase MsrA from Nocardia farcinica (strain IFM 10152).